The primary structure comprises 518 residues: Glutamate--cysteine ligase (518 aa).

It belongs to the glutamate--cysteine ligase type 1 family. Type 1 subfamily.

It carries out the reaction L-cysteine + L-glutamate + ATP = gamma-L-glutamyl-L-cysteine + ADP + phosphate + H(+). It participates in sulfur metabolism; glutathione biosynthesis; glutathione from L-cysteine and L-glutamate: step 1/2. This chain is Glutamate--cysteine ligase, found in Salmonella gallinarum (strain 287/91 / NCTC 13346).